A 208-amino-acid chain; its full sequence is AN1-type zinc finger protein 6 (208 aa).

The A20-type zinc finger occupies 8–42 (SQVPMLCSTGCGFYGNPRTNGMCSVCYKEHLQRQN). Cys14, Cys18, Cys30, and Cys33 together coordinate Zn(2+). The span at 41 to 68 (QNSSNGRISPPATSVSSLSESLPVQCTD) shows a compositional bias: polar residues. The interval 41-140 (QNSSNGRISP…PSEEQSKSLE (100 aa)) is disordered. Ser49 is subject to Phosphoserine. Residues 75 to 94 (QSTLDSTSSSMQPSPVSNQS) show a composition bias toward low complexity. 2 stretches are compositionally biased toward polar residues: residues 95-110 (LLSE…STSV) and 120-133 (LQAS…QPSE). The AN1-type zinc-finger motif lies at 143 to 189 (KQKKNRCFMCRKKVGLTGFECRCGNVYCGVHRYSDVHNCSYNYKADA). Residues Cys149, Cys152, Cys163, Cys165, Cys170, His173, His179, and Cys181 each contribute to the Zn(2+) site. Residue Lys204 is modified to N6-acetyllysine.

As to quaternary structure, interacts with PKN1. Interacts with TRAF2. Interacts with mono- and polyubiquitin. Interacts with PEX6. Interacts with PEX5 (Cys-linked ubiquitinated).

It is found in the cytoplasm. Its function is as follows. Involved in regulation of TNF-alpha induced NF-kappa-B activation and apoptosis. Involved in modulation of 'Lys-48'-linked polyubiquitination status of TRAF2 and decreases association of TRAF2 with RIPK1. Required for PTS1 target sequence-dependent protein import into peroxisomes and PEX5 stability; may cooperate with PEX6. In vitro involved in PEX5 export from the cytosol to peroxisomes. This is AN1-type zinc finger protein 6 (ZFAND6) from Pongo abelii (Sumatran orangutan).